A 419-amino-acid chain; its full sequence is uncharacterized protein (419 aa).

This is an uncharacterized protein from Schizosaccharomyces pombe (strain 972 / ATCC 24843) (Fission yeast).